The sequence spans 179 residues: Pyridoxal 5'-phosphate synthase subunit PdxT (179 aa).

48–50 contributes to the L-glutamine binding site; it reads GES. The Nucleophile role is filled by Cys79. L-glutamine-binding positions include Arg101 and 127 to 128; that span reads IR. Residues His163 and Glu165 each act as charge relay system in the active site.

Belongs to the glutaminase PdxT/SNO family. As to quaternary structure, in the presence of PdxS, forms a dodecamer of heterodimers. Only shows activity in the heterodimer.

It catalyses the reaction aldehydo-D-ribose 5-phosphate + D-glyceraldehyde 3-phosphate + L-glutamine = pyridoxal 5'-phosphate + L-glutamate + phosphate + 3 H2O + H(+). The catalysed reaction is L-glutamine + H2O = L-glutamate + NH4(+). It participates in cofactor biosynthesis; pyridoxal 5'-phosphate biosynthesis. Its function is as follows. Catalyzes the hydrolysis of glutamine to glutamate and ammonia as part of the biosynthesis of pyridoxal 5'-phosphate. The resulting ammonia molecule is channeled to the active site of PdxS. The protein is Pyridoxal 5'-phosphate synthase subunit PdxT of Francisella philomiragia subsp. philomiragia (strain ATCC 25017 / CCUG 19701 / FSC 153 / O#319-036).